We begin with the raw amino-acid sequence, 178 residues long: Outer envelope pore protein 16-2, chloroplastic (178 aa).

Residues 1–102 (MEKSGGRIVM…DALVKNTGKE (102 aa)) are contains beta strands. A helical membrane pass occupies residues 103 to 119 (SLQWGLAAGLYSGITYG).

It belongs to the Tim17/Tim22/Tim23 family. Plastid outer envelope porin OEP16 (TC 1.B.30) subfamily. As to quaternary structure, homodimer and oligomers in membrane. In terms of tissue distribution, detected in pollen and seeds. Present in leaves and cotyledons.

It is found in the plastid. The protein resides in the chloroplast outer membrane. Voltage-dependent high-conductance channel with a slight cation-selectivity; selective for amino acids but excludes triosephosphates or uncharged sugars. Non-essential amino acid-selective channel protein and translocation pore for NADPH:protochlorophyllide oxidoreductase A (PORA) and possibly PORB. The polypeptide is Outer envelope pore protein 16-2, chloroplastic (OEP162) (Arabidopsis thaliana (Mouse-ear cress)).